A 390-amino-acid chain; its full sequence is 1-deoxy-D-xylulose 5-phosphate reductoisomerase (390 aa).

8 residues coordinate NADPH: Thr10, Gly11, Ser12, Ile13, Gly36, Arg37, Asn38, and Asn121. Lys122 contributes to the 1-deoxy-D-xylulose 5-phosphate binding site. Glu123 is an NADPH binding site. A Mn(2+)-binding site is contributed by Asp147. Residues Ser148, Glu149, Ser173, and His196 each coordinate 1-deoxy-D-xylulose 5-phosphate. Position 149 (Glu149) interacts with Mn(2+). Gly202 lines the NADPH pocket. Positions 209, 214, 215, and 218 each coordinate 1-deoxy-D-xylulose 5-phosphate. Residue Glu218 participates in Mn(2+) binding. A disordered region spans residues 367–390 (AASEHGRREAEKRVGARAHAPAGR). Residues 370–380 (EHGRREAEKRV) are compositionally biased toward basic and acidic residues.

This sequence belongs to the DXR family. It depends on Mg(2+) as a cofactor. The cofactor is Mn(2+).

It catalyses the reaction 2-C-methyl-D-erythritol 4-phosphate + NADP(+) = 1-deoxy-D-xylulose 5-phosphate + NADPH + H(+). Its pathway is isoprenoid biosynthesis; isopentenyl diphosphate biosynthesis via DXP pathway; isopentenyl diphosphate from 1-deoxy-D-xylulose 5-phosphate: step 1/6. In terms of biological role, catalyzes the NADPH-dependent rearrangement and reduction of 1-deoxy-D-xylulose-5-phosphate (DXP) to 2-C-methyl-D-erythritol 4-phosphate (MEP). In Anaeromyxobacter sp. (strain K), this protein is 1-deoxy-D-xylulose 5-phosphate reductoisomerase.